A 303-amino-acid polypeptide reads, in one-letter code: Mycothiol acetyltransferase (303 aa).

2 consecutive N-acetyltransferase domains span residues 1–150 (MALL…RPLD) and 162–303 (VTIR…QFGR). 1D-myo-inositol 2-(L-cysteinylamino)-2-deoxy-alpha-D-glucopyranoside is bound at residue glutamate 18. 77–79 (LAV) is a binding site for acetyl-CoA. 1D-myo-inositol 2-(L-cysteinylamino)-2-deoxy-alpha-D-glucopyranoside contacts are provided by glutamate 189, lysine 229, and glutamate 237. Acetyl-CoA is bound by residues 241-243 (VGV) and 248-254 (QGNGLGR). Residue tyrosine 275 participates in 1D-myo-inositol 2-(L-cysteinylamino)-2-deoxy-alpha-D-glucopyranoside binding. 280–285 (NTAAIK) serves as a coordination point for acetyl-CoA.

This sequence belongs to the acetyltransferase family. MshD subfamily. Monomer.

The enzyme catalyses 1D-myo-inositol 2-(L-cysteinylamino)-2-deoxy-alpha-D-glucopyranoside + acetyl-CoA = mycothiol + CoA + H(+). Functionally, catalyzes the transfer of acetyl from acetyl-CoA to desacetylmycothiol (Cys-GlcN-Ins) to form mycothiol. The polypeptide is Mycothiol acetyltransferase (Saccharopolyspora erythraea (strain ATCC 11635 / DSM 40517 / JCM 4748 / NBRC 13426 / NCIMB 8594 / NRRL 2338)).